Consider the following 260-residue polypeptide: Small ribosomal subunit protein eS1 (260 aa).

Basic residues predominate over residues 1–18 (MAVGKNKRISKGKKGGKK). Residues 1 to 22 (MAVGKNKRISKGKKGGKKKAAD) are disordered.

Belongs to the eukaryotic ribosomal protein eS1 family. As to quaternary structure, component of the small ribosomal subunit. Mature ribosomes consist of a small (40S) and a large (60S) subunit. The 40S subunit contains about 33 different proteins and 1 molecule of RNA (18S). The 60S subunit contains about 49 different proteins and 3 molecules of RNA (25S, 5.8S and 5S).

The protein resides in the cytoplasm. The chain is Small ribosomal subunit protein eS1 from Helianthus annuus (Common sunflower).